The sequence spans 249 residues: MGYLVKLFKLVVWMLVIGLFSIPSLVSYVIFYDTVIPHSVIQYPVYFNYTTGLNFPTAEVRLDHFSIDPRLPGTSLLQIKMPHSPRNSAMGNFMVSVDFQDRNQRSLKQVKRTVLLPHRSPIHEYLKLIVCSPLYFMGILEETDIVNVRLFESETFAKSFNSITTLSVRFSVKNTPAQAIVKIYSKDIEFYEATLAFASKLHGMRWFMYTHKVSAFLVFTSLFWFTGITSTIITYLIVSSTSETKATRR.

Over 1–10 the chain is Cytoplasmic; the sequence is MGYLVKLFKL. A helical transmembrane segment spans residues 11 to 31; it reads VVWMLVIGLFSIPSLVSYVIF. The Lumenal portion of the chain corresponds to 32–212; that stretch reads YDTVIPHSVI…GMRWFMYTHK (181 aa). The helical transmembrane segment at 213 to 233 threads the bilayer; the sequence is VSAFLVFTSLFWFTGITSTII. Residues 234-249 are Cytoplasmic-facing; sequence TYLIVSSTSETKATRR.

This sequence belongs to the seipin family.

Its subcellular location is the endoplasmic reticulum membrane. In terms of biological role, involved in lipid metabolism and lipid droplet (LD) morphology, number, and size. Facilitates initiation of LD formation, and ensures that vectorial budding of LDs from the ER is directed towards the cytoplasm. This is Seipin homolog from Schizosaccharomyces pombe (strain 972 / ATCC 24843) (Fission yeast).